Consider the following 414-residue polypeptide: Nucleoporin NUP42 (414 aa).

The C3H1-type zinc-finger motif lies at 1-25 (MPVCNFFLQGRCRYGDTCWNEHPTG). 2 disordered regions span residues 24–73 (TGGR…RGAA) and 200–221 (PPAS…TSGF). FG repeat units lie at residues 43–44 (FG), 207–208 (FG), 214–215 (FG), 221–222 (FG), 233–234 (FG), 238–239 (FG), 257–258 (FG), 268–269 (FG), 280–281 (FG), 306–307 (FG), 325–326 (FG), 329–330 (FG), 335–336 (FG), 341–342 (FG), 347–348 (FG), 351–352 (FG), and 362–363 (FG).

Probable component of the nuclear pore complex (NPC).

It localises to the nucleus. It is found in the nuclear pore complex. Its subcellular location is the nucleus membrane. Required for the export of mRNAs containing poly(A) tails from the nucleus into the cytoplasm. This Danio rerio (Zebrafish) protein is Nucleoporin NUP42 (nup42).